A 180-amino-acid polypeptide reads, in one-letter code: Acireductone dioxygenase (180 aa).

Positions 97, 99, 103, and 141 each coordinate Fe(2+). The Ni(2+) site is built by His97, His99, Glu103, and His141.

It belongs to the acireductone dioxygenase (ARD) family. In terms of assembly, monomer. Requires Fe(2+) as cofactor. It depends on Ni(2+) as a cofactor.

The catalysed reaction is 1,2-dihydroxy-5-(methylsulfanyl)pent-1-en-3-one + O2 = 3-(methylsulfanyl)propanoate + CO + formate + 2 H(+). It carries out the reaction 1,2-dihydroxy-5-(methylsulfanyl)pent-1-en-3-one + O2 = 4-methylsulfanyl-2-oxobutanoate + formate + 2 H(+). Its pathway is amino-acid biosynthesis; L-methionine biosynthesis via salvage pathway; L-methionine from S-methyl-5-thio-alpha-D-ribose 1-phosphate: step 5/6. In terms of biological role, catalyzes 2 different reactions between oxygen and the acireductone 1,2-dihydroxy-3-keto-5-methylthiopentene (DHK-MTPene) depending upon the metal bound in the active site. Fe-containing acireductone dioxygenase (Fe-ARD) produces formate and 2-keto-4-methylthiobutyrate (KMTB), the alpha-ketoacid precursor of methionine in the methionine recycle pathway. Ni-containing acireductone dioxygenase (Ni-ARD) produces methylthiopropionate, carbon monoxide and formate, and does not lie on the methionine recycle pathway. The polypeptide is Acireductone dioxygenase (Citrobacter koseri (strain ATCC BAA-895 / CDC 4225-83 / SGSC4696)).